A 434-amino-acid polypeptide reads, in one-letter code: Arrestin domain-containing protein 1 (434 aa).

The tract at residues 295-345 (PGPGSSPGLLSPVVPSAPPQEEAEAVASGPHFSDPVSLSTKSHSQQQPLST) is disordered. The segment covering 330–342 (VSLSTKSHSQQQP) has biased composition (polar residues). 2 short sequence motifs (PPxY motif) span residues 401–404 (PPEY) and 414–417 (PPSY).

It belongs to the arrestin family. Interacts (via PPxY motifs) with ITCH (via WW domains); the interaction is direct and participates in the recruitment of the ubiquitin-protein ligase ITCH to the NOTCH1 receptor. Interacts with ARRB1 and ARRB2; the interaction is direct. Interacts with TSG101; may recruit TSG101 to the plasma membrane. Interacts (via PPxY motifs) with WWP2 (via WW domains); ubiquitinates ARRDC1. Interacts with SLC11A2; controls the incorporation of SLC11A2 into extracellular vesicles through an ubiquitination-dependent mechanism. Interacts with WWP1 (via WW domains). Interacts with NEDD4 (via WW domains). Interacts with PDCD6IP. Post-translationally, ubiquitinated. Ubiquitination by WWP2; promotes localization to extracellular microvesicles. Ubiquitinated by WWP1.

Its subcellular location is the cell membrane. Functions as an adapter recruiting ubiquitin-protein ligases to their specific substrates. Through an ubiquitination-dependent mechanism plays for instance a role in the incorporation of SLC11A2 into extracellular vesicles. More generally, plays a role in the extracellular transport of proteins between cells through the release in the extracellular space of microvesicles. By participating in the ITCH-mediated ubiquitination and subsequent degradation of NOTCH1, negatively regulates the NOTCH signaling pathway. In Rattus norvegicus (Rat), this protein is Arrestin domain-containing protein 1.